Reading from the N-terminus, the 82-residue chain is Small ribosomal subunit protein eS27B (82 aa).

Residues 37–59 form a C4-type zinc finger; that stretch reads CPGCLNITTVFSHAQTAVTCESC.

Belongs to the eukaryotic ribosomal protein eS27 family. In terms of assembly, component of the small ribosomal subunit (SSU). Mature yeast ribosomes consist of a small (40S) and a large (60S) subunit. The 40S small subunit contains 1 molecule of ribosomal RNA (18S rRNA) and 33 different proteins (encoded by 57 genes). The large 60S subunit contains 3 rRNA molecules (25S, 5.8S and 5S rRNA) and 46 different proteins (encoded by 81 genes). Zn(2+) is required as a cofactor. In terms of processing, the N-terminus is not modified.

It is found in the cytoplasm. Functionally, component of the ribosome, a large ribonucleoprotein complex responsible for the synthesis of proteins in the cell. The small ribosomal subunit (SSU) binds messenger RNAs (mRNAs) and translates the encoded message by selecting cognate aminoacyl-transfer RNA (tRNA) molecules. The large subunit (LSU) contains the ribosomal catalytic site termed the peptidyl transferase center (PTC), which catalyzes the formation of peptide bonds, thereby polymerizing the amino acids delivered by tRNAs into a polypeptide chain. The nascent polypeptides leave the ribosome through a tunnel in the LSU and interact with protein factors that function in enzymatic processing, targeting, and the membrane insertion of nascent chains at the exit of the ribosomal tunnel. This Saccharomyces cerevisiae (strain ATCC 204508 / S288c) (Baker's yeast) protein is Small ribosomal subunit protein eS27B.